The following is a 122-amino-acid chain: Ribonuclease P protein component (122 aa).

The protein belongs to the RnpA family. Consists of a catalytic RNA component (M1 or rnpB) and a protein subunit.

It catalyses the reaction Endonucleolytic cleavage of RNA, removing 5'-extranucleotides from tRNA precursor.. In terms of biological role, RNaseP catalyzes the removal of the 5'-leader sequence from pre-tRNA to produce the mature 5'-terminus. It can also cleave other RNA substrates such as 4.5S RNA. The protein component plays an auxiliary but essential role in vivo by binding to the 5'-leader sequence and broadening the substrate specificity of the ribozyme. The sequence is that of Ribonuclease P protein component from Shouchella clausii (strain KSM-K16) (Alkalihalobacillus clausii).